The sequence spans 661 residues: Translation factor GUF1 homolog, mitochondrial (661 aa).

Positions 59–242 (ENIRNFCIVA…AIIDRIPSPK (184 aa)) constitute a tr-type G domain. Residues 68 to 75 (AHVDHGKS), 135 to 139 (DTPGH), and 189 to 192 (NKVD) contribute to the GTP site.

This sequence belongs to the TRAFAC class translation factor GTPase superfamily. Classic translation factor GTPase family. LepA subfamily.

The protein localises to the mitochondrion inner membrane. The enzyme catalyses GTP + H2O = GDP + phosphate + H(+). In terms of biological role, promotes mitochondrial protein synthesis. May act as a fidelity factor of the translation reaction, by catalyzing a one-codon backward translocation of tRNAs on improperly translocated ribosomes. Binds to mitochondrial ribosomes in a GTP-dependent manner. In Ixodes scapularis (Black-legged tick), this protein is Translation factor GUF1 homolog, mitochondrial.